Consider the following 62-residue polypeptide: Photosystem II reaction center protein Z (62 aa).

The next 2 helical transmembrane spans lie at 8-28 (LIAA…VVFS) and 41-61 (WGGA…SIVV).

Belongs to the PsbZ family. PSII is composed of 1 copy each of membrane proteins PsbA, PsbB, PsbC, PsbD, PsbE, PsbF, PsbH, PsbI, PsbJ, PsbK, PsbL, PsbM, PsbT, PsbX, PsbY, PsbZ, Psb30/Ycf12, peripheral proteins PsbO, CyanoQ (PsbQ), PsbU, PsbV and a large number of cofactors. It forms dimeric complexes.

It localises to the cellular thylakoid membrane. May control the interaction of photosystem II (PSII) cores with the light-harvesting antenna, regulates electron flow through the 2 photosystem reaction centers. PSII is a light-driven water plastoquinone oxidoreductase, using light energy to abstract electrons from H(2)O, generating a proton gradient subsequently used for ATP formation. This is Photosystem II reaction center protein Z from Acaryochloris marina (strain MBIC 11017).